The sequence spans 279 residues: Protein phosphatase 1 regulatory subunit 3E (279 aa).

Phosphoserine occurs at positions 16 and 33. Residues 28 to 87 form a disordered region; the sequence is RSQRPSLEEESEEEPGEGGTRPGARSRAHVPGRGRRARSAPAGGGGARTARSRSPDTRKR. The span at 51-65 shows a compositional bias: basic residues; it reads ARSRAHVPGRGRRAR. Serine 66 carries the phosphoserine modification. The PP1-binding motif signature appears at 87–90; it reads RVRF. Positions 154–259 constitute a CBM21 domain; it reads AARLQAQRIC…NNGGRDYALL (106 aa). The glycogen-binding motif stretch occupies residues 176 to 198; the sequence is GSARVLDLAYEKRVSVRWSADGW. Positions 248 to 256 are substrate-binding motif; that stretch reads WDNNGGRDY.

Its function is as follows. Acts as a glycogen-targeting subunit for PP1. PP1 is involved in glycogen metabolism and contributes to the activation of glycogen synthase leading to an increase in glycogen synthesis. The polypeptide is Protein phosphatase 1 regulatory subunit 3E (Ppp1r3e) (Mus musculus (Mouse)).